We begin with the raw amino-acid sequence, 289 residues long: Pteridine reductase 1 (289 aa).

14–41 (GAAKRLGSSIAEALHAEGYTVCLHYHRS) lines the NADP(+) pocket. Ser176 contacts substrate. Tyr195 acts as the Proton acceptor in catalysis. 195–199 (YTMAK) serves as a coordination point for NADP(+).

This sequence belongs to the short-chain dehydrogenases/reductases (SDR) family. Homotetramer.

It catalyses the reaction (6R)-L-erythro-5,6,7,8-tetrahydrobiopterin + 2 NADP(+) = L-erythro-biopterin + 2 NADPH + 2 H(+). The protein operates within cofactor biosynthesis; tetrahydrobiopterin biosynthesis; tetrahydrobiopterin from biopterin: step 1/1. In terms of biological role, exhibits a NADPH-dependent biopterin reductase activity. Has good activity with folate and significant activity with dihydrofolate and dihydrobiopterin, but not with quinonoid dihydrobiopterin. Confers resistance to methotrexate (MTX). This Leishmania tarentolae (Sauroleishmania tarentolae) protein is Pteridine reductase 1 (PTR1).